The sequence spans 450 residues: Exodeoxyribonuclease 7 large subunit (450 aa).

Belongs to the XseA family. As to quaternary structure, heterooligomer composed of large and small subunits.

It is found in the cytoplasm. It carries out the reaction Exonucleolytic cleavage in either 5'- to 3'- or 3'- to 5'-direction to yield nucleoside 5'-phosphates.. In terms of biological role, bidirectionally degrades single-stranded DNA into large acid-insoluble oligonucleotides, which are then degraded further into small acid-soluble oligonucleotides. This chain is Exodeoxyribonuclease 7 large subunit, found in Listeria welshimeri serovar 6b (strain ATCC 35897 / DSM 20650 / CCUG 15529 / CIP 8149 / NCTC 11857 / SLCC 5334 / V8).